The chain runs to 198 residues: Zinc finger protein 41 (198 aa).

Over residues 1 to 12 (MEKPATRKKKSQ) the composition is skewed to basic residues. Residues 1 to 56 (MEKPATRKKKSQAPKEEAGAQKATVKGEKTSKGKKATKKPRKPRRPRKEPVLSPED) are disordered. Positions 13-31 (APKEEAGAQKATVKGEKTS) are enriched in basic and acidic residues. The span at 32 to 47 (KGKKATKKPRKPRRPR) shows a compositional bias: basic residues. 4 consecutive C2H2-type zinc fingers follow at residues 87-109 (YECGECGRIFKHKTDHIRHQRVH), 115-137 (FKCDQCGKTFRHSSDVTKHQRIH), 143-165 (FKCGECGKAFNCGSNLLKHQKTH), and 171-193 (YGCEECGKSFAYSSCLIRHRKRH).

The protein belongs to the krueppel C2H2-type zinc-finger protein family. Predominantly in the spermatocytes and spermatids of testes. It is also expressed in the fetus and embryonic stem cells at lower levels.

The protein localises to the nucleus. Its function is as follows. A putative DNA-binding regulatory protein associated with meiosis in spermatogenesis. This is Zinc finger protein 41 (Zfp41) from Mus musculus (Mouse).